A 717-amino-acid polypeptide reads, in one-letter code: Adhesion cell surface protein MAD1 (717 aa).

The first 19 residues, 1–19 (MKSALSVVVAAAGVQQASA), serve as a signal peptide directing secretion. Low complexity-rich tracts occupy residues 237–254 (TPVTTLQTYTTPSQQTTT) and 262–274 (SKETTTSAQQTTP). Disordered regions lie at residues 237 to 392 (TPVT…ATTT) and 451 to 506 (RTQS…TPPC). 8 repeat units span residues 275 to 286 (GKETTPAQQTTP), 287 to 298 (SKETTPVQQTTS), 299 to 310 (GKETTPAQQTTP), 311 to 328 (GKETTSSQETTSAHQTTP), 329 to 340 (GKETTPAQQTTP), 341 to 352 (GKETTPAQQTTP), 353 to 364 (GKETTPAQQTTP), and 365 to 376 (GKETTPAQQTTP). A compositionally biased stretch (polar residues) spans 275 to 366 (GKETTPAQQT…TPAQQTTPGK (92 aa)). 2 stretches are compositionally biased toward low complexity: residues 368 to 392 (TTPAQQTTPGQQTTPSQPTTAATTT) and 484 to 503 (QPTGEKPNPVTSQPPQSTQT). Positions 481–595 (TPEQPTGEKP…TQIITVTGTP (115 aa)) constitute a CFEM domain. Intrachain disulfides connect Cys-513-Cys-546, Cys-524-Cys-532, and Cys-534-Cys-568. Asp-529 provides a ligand contact to heme. Asn-614 is a glycosylation site (N-linked (GlcNAc...) asparagine). The segment at 632 to 690 (PTPTGGVPNQPPATASVPAGQNPPPVTGQNPPPAVTDQSPPPAITTGTGGVIPPKPTGS) is disordered. Residues 652 to 674 (QNPPPVTGQNPPPAVTDQSPPPA) show a composition bias toward pro residues. Ala-695 carries GPI-anchor amidated alanine lipidation. Residues 696 to 717 (GSGRVGAGLGMVLAVAAFVAAL) constitute a propeptide, removed in mature form.

It belongs to the RBT5 family. In terms of processing, the GPI-anchor is attached to the protein in the endoplasmic reticulum and serves to target the protein to the cell surface. There, the glucosamine-inositol phospholipid moiety is cleaved off and the GPI-modified mannoprotein is covalently attached via its lipidless GPI glycan remnant to the 1,6-beta-glucan of the outer cell wall layer.

Its subcellular location is the secreted. It is found in the cell wall. The protein localises to the cell membrane. Cell surface adhesion protein that plays a key role in virulence by allowing adherence to the insect host surface. Required to orientate the cytoskeleton and stimulate the expression of genes involved in the cell cycle. Is also involved in achieving the septin hourglass shape and subsequent separation of cells. The polypeptide is Adhesion cell surface protein MAD1 (Metarhizium anisopliae (Entomophthora anisopliae)).